Consider the following 466-residue polypeptide: tRNA dimethylallyltransferase 2 (466 aa).

Residue 27 to 34 (GPTGSGKS) coordinates ATP. 29–34 (TGSGKS) contacts substrate. The segment at 52 to 55 (DAMQ) is interaction with substrate tRNA. The tract at residues 433–466 (WEHHKQGRTHRKRTTRHKNSQTYKNREVQEAEVN) is disordered. Residues 437–451 (KQGRTHRKRTTRHKN) show a composition bias toward basic residues. The span at 456–466 (KNREVQEAEVN) shows a compositional bias: basic and acidic residues.

This sequence belongs to the IPP transferase family. The cofactor is Mg(2+). As to expression, expressed ubiquitously, with highest expression in proliferating tissues.

Its subcellular location is the cytoplasm. It catalyses the reaction adenosine(37) in tRNA + dimethylallyl diphosphate = N(6)-dimethylallyladenosine(37) in tRNA + diphosphate. Catalyzes the transfer of a dimethylallyl group onto the adenine at position 37 in tRNAs that read codons beginning with uridine, leading to the formation of N6-(dimethylallyl)adenosine (i(6)A). Involved in the cis-type cytokinin biosynthesis. This chain is tRNA dimethylallyltransferase 2 (IPT2), found in Arabidopsis thaliana (Mouse-ear cress).